A 171-amino-acid chain; its full sequence is NADH-quinone oxidoreductase subunit I (171 aa).

4Fe-4S ferredoxin-type domains are found at residues 41–71 and 81–110; these read LTRD…LQKT and EFFR…LTPD. [4Fe-4S] cluster is bound by residues Cys-51, Cys-54, Cys-57, Cys-61, Cys-90, Cys-93, Cys-96, and Cys-100.

The protein belongs to the complex I 23 kDa subunit family. NDH-1 is composed of 14 different subunits. Subunits NuoA, H, J, K, L, M, N constitute the membrane sector of the complex. The cofactor is [4Fe-4S] cluster.

Its subcellular location is the cell inner membrane. The enzyme catalyses a quinone + NADH + 5 H(+)(in) = a quinol + NAD(+) + 4 H(+)(out). Its function is as follows. NDH-1 shuttles electrons from NADH, via FMN and iron-sulfur (Fe-S) centers, to quinones in the respiratory chain. The immediate electron acceptor for the enzyme in this species is believed to be ubiquinone. Couples the redox reaction to proton translocation (for every two electrons transferred, four hydrogen ions are translocated across the cytoplasmic membrane), and thus conserves the redox energy in a proton gradient. The sequence is that of NADH-quinone oxidoreductase subunit I from Methylococcus capsulatus (strain ATCC 33009 / NCIMB 11132 / Bath).